The sequence spans 473 residues: Photosystem II CP43 reaction center protein (473 aa).

Residues 1 to 14 constitute a propeptide that is removed on maturation; that stretch reads MKTLYSLRRFYPVE. At T15 the chain carries N-acetylthreonine. T15 carries the phosphothreonine modification. 5 helical membrane-spanning segments follow: residues 69–93, 134–155, 178–200, 255–275, and 291–312; these read LFEV…PHLA, LLGP…KDRN, KALY…RKIT, KPFA…LSYS, and WFNN…ASQA. E367 is a binding site for [CaMn4O5] cluster. Residues 447–471 traverse the membrane as a helical segment; that stretch reads RARAAAAGFEKGIDRDFEPVLSMTP.

The protein belongs to the PsbB/PsbC family. PsbC subfamily. As to quaternary structure, PSII is composed of 1 copy each of membrane proteins PsbA, PsbB, PsbC, PsbD, PsbE, PsbF, PsbH, PsbI, PsbJ, PsbK, PsbL, PsbM, PsbT, PsbX, PsbY, PsbZ, Psb30/Ycf12, at least 3 peripheral proteins of the oxygen-evolving complex and a large number of cofactors. It forms dimeric complexes. It depends on Binds multiple chlorophylls and provides some of the ligands for the Ca-4Mn-5O cluster of the oxygen-evolving complex. It may also provide a ligand for a Cl- that is required for oxygen evolution. PSII binds additional chlorophylls, carotenoids and specific lipids. as a cofactor.

Its subcellular location is the plastid. It is found in the chloroplast thylakoid membrane. One of the components of the core complex of photosystem II (PSII). It binds chlorophyll and helps catalyze the primary light-induced photochemical processes of PSII. PSII is a light-driven water:plastoquinone oxidoreductase, using light energy to abstract electrons from H(2)O, generating O(2) and a proton gradient subsequently used for ATP formation. This is Photosystem II CP43 reaction center protein from Helianthus annuus (Common sunflower).